A 533-amino-acid polypeptide reads, in one-letter code: Putative phosphate permease HP_1491 (533 aa).

Transmembrane regions (helical) follow at residues 23–43 (IALALLFLIGAALLALIFGQA), 47–67 (GLLLIFAAVIGGYMAMNIGAN), 81–101 (AISMGGAILIAAICEMLGAII), 129–149 (VMLASLLSGALWLHVATLIGA), 156–176 (SVVGGIMGAGMAAAGMVAVNW), 182–202 (IVASWVISPLMGALIAMFFLM), 221–241 (VVPYLVALMSLTFSWYLIVKV), 248–268 (LNFEIQLACGCILALLIFILF), 286–306 (INELFNVPLIFAAALLSFAHG), 338–358 (VPLWIMVVGAAGIALGLSLYG), 372–392 (LDKMQAFCIALSAVITVLLAS), and 509–529 (LVTVPVSALLGALLFVALGFI).

This sequence belongs to the inorganic phosphate transporter (PiT) (TC 2.A.20) family.

Its subcellular location is the cell membrane. In terms of biological role, potential transporter for phosphate. The protein is Putative phosphate permease HP_1491 of Helicobacter pylori (strain ATCC 700392 / 26695) (Campylobacter pylori).